A 229-amino-acid chain; its full sequence is Coiled-coil domain-containing protein 134 (229 aa).

A signal peptide spans 1 to 22; that stretch reads MDPVQLLSFLLALLLPLGTALD. Residues 192-218 are a coiled coil; the sequence is NTDAFQKALREEEKRRRKEEKRKEIRK. The tract at residues 201–229 is disordered; the sequence is REEEKRRRKEEKRKEIRKGPRITRSRSEL. Positions 219–229 are enriched in basic residues; that stretch reads GPRITRSRSEL. The short motif at 226-229 is the Prevents secretion from ER element; it reads RSEL.

This sequence belongs to the CCDC134 family.

Its subcellular location is the endoplasmic reticulum lumen. Its function is as follows. Molecular adapter required to prevent protein hyperglycosylation of HSP90B1: during translation, associates with nascent HSP90B1 and the STT3A catalytic component of the OST-A complex and tethers them to a specialized translocon that forms a microenvironment for HSP90B1 folding. In the CCDC134-containing translocon, STT3A associates with the SRT pseudosubstrate motif of HSP90B1, preventing access to facultative glycosylation sites until folding is completed, preventing hyperglycosylation and subsequent degradation of HSP90B1. The protein is Coiled-coil domain-containing protein 134 (ccdc134) of Xenopus tropicalis (Western clawed frog).